We begin with the raw amino-acid sequence, 293 residues long: Mycothiol S-conjugate amidase (293 aa).

3 residues coordinate Zn(2+): His-13, Asp-16, and His-144.

It belongs to the MshB deacetylase family. Mca subfamily. In terms of assembly, monomer. The cofactor is Zn(2+).

It catalyses the reaction mycothiol S-conjugate + H2O = an N-acetyl-L-cysteine-S-conjugate + 1D-myo-inositol 2-amino-2-deoxy-alpha-D-glucopyranoside. In terms of biological role, a mycothiol (MSH, N-acetylcysteinyl-glucosaminyl-inositol) S-conjugate amidase, it recycles conjugated MSH to the N-acetyl cysteine conjugate (AcCys S-conjugate, a mercapturic acid) and the MSH precursor. Involved in MSH-dependent detoxification of a number of alkylating agents and antibiotics. The chain is Mycothiol S-conjugate amidase from Streptomyces coelicolor (strain ATCC BAA-471 / A3(2) / M145).